The sequence spans 497 residues: Endoglucanase 17 (497 aa).

An N-terminal signal peptide occupies residues 1–21; the sequence is MAAAGGAVLLLVLATATSVTG. D77 serves as the catalytic Nucleophile. H406 is an active-site residue. N451 is a glycosylation site (N-linked (GlcNAc...) asparagine). Residues D458 and E467 contribute to the active site.

This sequence belongs to the glycosyl hydrolase 9 (cellulase E) family.

The protein resides in the secreted. The catalysed reaction is Endohydrolysis of (1-&gt;4)-beta-D-glucosidic linkages in cellulose, lichenin and cereal beta-D-glucans.. The polypeptide is Endoglucanase 17 (GLU13) (Oryza sativa subsp. japonica (Rice)).